Here is a 401-residue protein sequence, read N- to C-terminus: Imidazolonepropionase (401 aa).

The Fe(3+) site is built by His-66 and His-68. Zn(2+)-binding residues include His-66 and His-68. The 4-imidazolone-5-propanoate site is built by Arg-75, Tyr-138, and His-171. Tyr-138 provides a ligand contact to N-formimidoyl-L-glutamate. His-236 contacts Fe(3+). His-236 lines the Zn(2+) pocket. Gln-239 is a binding site for 4-imidazolone-5-propanoate. Asp-311 lines the Fe(3+) pocket. Zn(2+) is bound at residue Asp-311. Positions 313 and 315 each coordinate N-formimidoyl-L-glutamate. Thr-316 lines the 4-imidazolone-5-propanoate pocket.

It belongs to the metallo-dependent hydrolases superfamily. HutI family. Zn(2+) is required as a cofactor. Fe(3+) serves as cofactor.

Its subcellular location is the cytoplasm. It carries out the reaction 4-imidazolone-5-propanoate + H2O = N-formimidoyl-L-glutamate. It participates in amino-acid degradation; L-histidine degradation into L-glutamate; N-formimidoyl-L-glutamate from L-histidine: step 3/3. Functionally, catalyzes the hydrolytic cleavage of the carbon-nitrogen bond in imidazolone-5-propanoate to yield N-formimidoyl-L-glutamate. It is the third step in the universal histidine degradation pathway. This chain is Imidazolonepropionase, found in Acinetobacter baumannii (strain AB0057).